Reading from the N-terminus, the 910-residue chain is 2-oxoglutarate dehydrogenase E1 component (910 aa).

The protein belongs to the alpha-ketoglutarate dehydrogenase family. In terms of assembly, homodimer. Part of the 2-oxoglutarate dehydrogenase (OGDH) complex composed of E1 (2-oxoglutarate dehydrogenase), E2 (dihydrolipoamide succinyltransferase) and E3 (dihydrolipoamide dehydrogenase); the complex contains multiple copies of the three enzymatic components (E1, E2 and E3). Thiamine diphosphate is required as a cofactor.

The catalysed reaction is N(6)-[(R)-lipoyl]-L-lysyl-[protein] + 2-oxoglutarate + H(+) = N(6)-[(R)-S(8)-succinyldihydrolipoyl]-L-lysyl-[protein] + CO2. Functionally, E1 component of the 2-oxoglutarate dehydrogenase (OGDH) complex which catalyzes the decarboxylation of 2-oxoglutarate, the first step in the conversion of 2-oxoglutarate to succinyl-CoA and CO(2). The chain is 2-oxoglutarate dehydrogenase E1 component from Staphylococcus aureus (strain N315).